The sequence spans 168 residues: MSVMASDKACAPVRASRPFPKQKLRELVLQALYALEIDPEGEDSLVSLLMTEASVSKKNAAYALMFCRAIRANQPDLDALLDATIRTTTLARLTIIERNILRMMLFEHQQNQDCCPVPVAVLIAETTRLIKKFSYSEGSSLILAVLGSIFDHPAPALDTPLEPTSMCG.

The protein belongs to the NusB family.

Involved in transcription antitermination. Required for transcription of ribosomal RNA (rRNA) genes. Binds specifically to the boxA antiterminator sequence of the ribosomal RNA (rrn) operons. The polypeptide is Transcription antitermination protein NusB (Chlamydia trachomatis serovar L2 (strain ATCC VR-902B / DSM 19102 / 434/Bu)).